The following is a 467-amino-acid chain: uncharacterized protein (467 aa).

9 Sel1-like repeats span residues 38–73, 107–138, 139–172, 173–208, 240–275, 276–311, 343–378, 379–414, and 415–450; these read PAAA…EQGH, PEAQ…KNNN, PHGQ…AQGL, PEAH…QQGY, PDAH…AERH, PEGL…EAGS, AERL…ELGH, SKAQ…AKKD, and SMAF…NNGY.

This is an uncharacterized protein from Neisseria meningitidis serogroup B (strain ATCC BAA-335 / MC58).